Consider the following 147-residue polypeptide: 3-dehydroquinate dehydratase (147 aa).

Catalysis depends on Tyr-23, which acts as the Proton acceptor. 3 residues coordinate substrate: Asn-74, His-80, and Asp-87. The active-site Proton donor is the His-100. Residues 101-102 (IS) and Arg-111 contribute to the substrate site.

Belongs to the type-II 3-dehydroquinase family. In terms of assembly, homododecamer.

It catalyses the reaction 3-dehydroquinate = 3-dehydroshikimate + H2O. It functions in the pathway metabolic intermediate biosynthesis; chorismate biosynthesis; chorismate from D-erythrose 4-phosphate and phosphoenolpyruvate: step 3/7. Functionally, catalyzes a trans-dehydration via an enolate intermediate. The chain is 3-dehydroquinate dehydratase from Bacillus pumilus (strain SAFR-032).